A 298-amino-acid polypeptide reads, in one-letter code: Ethanolamine ammonia-lyase small subunit (298 aa).

The disordered stretch occupies residues 17-37; it reads MGQDVPQPVAPSKQEGAKPQC. Positions 210, 231, and 261 each coordinate adenosylcob(III)alamin.

It belongs to the EutC family. The basic unit is a heterodimer which dimerizes to form tetramers. The heterotetramers trimerize; 6 large subunits form a core ring with 6 small subunits projecting outwards. Adenosylcob(III)alamin is required as a cofactor.

It localises to the bacterial microcompartment. It catalyses the reaction ethanolamine = acetaldehyde + NH4(+). The protein operates within amine and polyamine degradation; ethanolamine degradation. Catalyzes the deamination of various vicinal amino-alcohols to oxo compounds. Allows this organism to utilize ethanolamine as the sole source of nitrogen and carbon in the presence of external vitamin B12. The protein is Ethanolamine ammonia-lyase small subunit of Salmonella paratyphi A (strain ATCC 9150 / SARB42).